Consider the following 911-residue polypeptide: DNA polymerase I (911 aa).

The 5'-3' exonuclease domain maps to V186–R280. The 3'-5' exonuclease domain maps to R320–D497.

The protein belongs to the DNA polymerase type-A family. In terms of assembly, single-chain monomer with multiple functions.

It catalyses the reaction DNA(n) + a 2'-deoxyribonucleoside 5'-triphosphate = DNA(n+1) + diphosphate. In addition to polymerase activity, this DNA polymerase exhibits 3'-5' and 5'-3' exonuclease activity. The protein is DNA polymerase I (polA) of Mycobacterium leprae (strain TN).